Here is an 80-residue protein sequence, read N- to C-terminus: Large ribosomal subunit protein uL24 (80 aa).

This sequence belongs to the universal ribosomal protein uL24 family. Part of the 50S ribosomal subunit.

In terms of biological role, one of two assembly initiator proteins, it binds directly to the 5'-end of the 23S rRNA, where it nucleates assembly of the 50S subunit. Functionally, one of the proteins that surrounds the polypeptide exit tunnel on the outside of the subunit. The polypeptide is Large ribosomal subunit protein uL24 (Chlorobaculum tepidum (strain ATCC 49652 / DSM 12025 / NBRC 103806 / TLS) (Chlorobium tepidum)).